The chain runs to 483 residues: UDP-N-acetylmuramoyl-L-alanyl-D-glutamate--L-lysine ligase (483 aa).

Ser44 is a binding site for UDP-N-acetyl-alpha-D-muramoyl-L-alanyl-D-glutamate. Residue 120–126 (GTKGKTT) coordinates ATP. UDP-N-acetyl-alpha-D-muramoyl-L-alanyl-D-glutamate is bound by residues 162–163 (TT), Ser189, and Arg197. An N6-carboxylysine modification is found at Lys231. The short motif at 406–409 (DDPN) is the L-lysine recognition motif element.

It belongs to the MurCDEF family. MurE subfamily. In terms of processing, carboxylation is probably crucial for Mg(2+) binding and, consequently, for the gamma-phosphate positioning of ATP.

The protein resides in the cytoplasm. The enzyme catalyses UDP-N-acetyl-alpha-D-muramoyl-L-alanyl-D-glutamate + L-lysine + ATP = UDP-N-acetyl-alpha-D-muramoyl-L-alanyl-gamma-D-glutamyl-L-lysine + ADP + phosphate + H(+). Its pathway is cell wall biogenesis; peptidoglycan biosynthesis. In terms of biological role, catalyzes the addition of L-lysine to the nucleotide precursor UDP-N-acetylmuramoyl-L-alanyl-D-glutamate (UMAG) in the biosynthesis of bacterial cell-wall peptidoglycan. In Streptococcus mutans serotype c (strain ATCC 700610 / UA159), this protein is UDP-N-acetylmuramoyl-L-alanyl-D-glutamate--L-lysine ligase.